The sequence spans 101 residues: Small ribosomal subunit protein uS14A (101 aa).

The interval 35-56 (TSSYEQRLDAQRALSRQPRDAS) is disordered.

This sequence belongs to the universal ribosomal protein uS14 family. Part of the 30S ribosomal subunit. Contacts proteins S3 and S10.

Binds 16S rRNA, required for the assembly of 30S particles and may also be responsible for determining the conformation of the 16S rRNA at the A site. The sequence is that of Small ribosomal subunit protein uS14A from Mycobacterium marinum (strain ATCC BAA-535 / M).